The sequence spans 256 residues: Kallikrein 1-related peptidase-like b4 (256 aa).

The first 17 residues, 1–17 (MWFLILFLALSLGGIDA), serve as a signal peptide directing secretion. The segment at 18–24 (APPVQSQ) is activation peptide homolog. Residues 18-253 (APPVQSQVDC…FSSWIRETMA (236 aa)) enclose the Peptidase S1 domain. An intrachain disulfide couples C45 to C61. Positions 77 and 84 each coordinate Zn(2+). Cystine bridges form between C147/C214, C179/C193, and C204/C229.

It belongs to the peptidase S1 family. Kallikrein subfamily. As to quaternary structure, 7S nerve growth factor is composed of two alpha chains, a beta dimer composed of identical chains, and two gamma chains. The cofactor is Zn(2+). Post-translationally, the presence of Gln-24 prevents cleavage of the activation peptide, which remains attached at the amino end of the mature alpha chain.

The chain is Kallikrein 1-related peptidase-like b4 (Klk1b4) from Mus musculus (Mouse).